A 1049-amino-acid polypeptide reads, in one-letter code: Desmoglein-1 (1049 aa).

Residues 1–23 form the signal peptide; that stretch reads MDWSFFRVVAMLFIFLVVVEVNS. Positions 24-49 are excised as a propeptide; the sequence is EFRIQVRDYNTKNGTIKWHSIRRQKR. N-linked (GlcNAc...) asparagine glycans are attached at residues Asn-36, Asn-110, and Asn-180. 4 consecutive Cadherin domains span residues 50–158, 159–270, 271–385, and 386–497; these read EWIK…PVFS, MATF…PYME, QSSY…GPVF, and RPGS…TEPN. The Extracellular segment spans residues 50-548; sequence EWIKFAAACR…LLSDNVHFGP (499 aa). The interval 485 to 534 is disordered; it reads SFGNDDRTNTEPNTKITTNTGRQESTSSTNYDTSTTSTDSSQVYSSEPGN. The segment covering 494 to 508 has biased composition (polar residues); the sequence is TEPNTKITTNTGRQE. Over residues 509–530 the composition is skewed to low complexity; sequence STSSTNYDTSTTSTDSSQVYSS. Residues 549-569 traverse the membrane as a helical segment; it reads AGIGLLIMGFLVLGLVPFLMI. Residues 570–1049 are Cytoplasmic-facing; it reads CCDCGGAPRS…TKYSTVQYSK (480 aa). At Ser-579 the chain carries Phosphoserine. 5 Desmoglein repeat repeats span residues 813–839, 840–869, 870–899, 900–927, and 928–956; these read TYPSGPGVLHPKPILDPLGYGNVTVTE, SYTTSDTLKPSVHVHDNRPASNVVVTERVV, GPISGADLHGMLEMPDLRDGSNVIVTERVI, APSSSLPTSLTIHHPRESSNVVVTERVI, and QPTSGMIGSLSMHPELANAHNVIVTERVV. The tract at residues 1014-1035 is disordered; sequence HMRSSSDHHFNQTIGSASPSTA. The segment covering 1024 to 1035 has biased composition (polar residues); it reads NQTIGSASPSTA.

As to quaternary structure, binds to JUP/plakoglobin. Interacts with PKP2. Interacts with DSC3; there is evidence to suggest that the interaction promotes cell-cell adhesion of keratinocytes. In terms of assembly, (Microbial infection) Interacts with Staphylococcus aureus protein SdrD; this interaction increases S.aureus adherence to keratinocytes. Expressed in all suprabasal layers of the epidermis, with the highest expression seen in the granular layer (at protein level).

The protein localises to the cell membrane. The protein resides in the cell junction. It localises to the desmosome. It is found in the cytoplasm. Its subcellular location is the nucleus. Its function is as follows. Component of intercellular desmosome junctions. Involved in the interaction of plaque proteins and intermediate filaments mediating cell-cell adhesion. The sequence is that of Desmoglein-1 (DSG1) from Homo sapiens (Human).